Consider the following 299-residue polypeptide: Very long chain fatty acid elongase 5 (299 aa).

An N-acetylmethionine modification is found at methionine 1. 6 helical membrane passes run tryptophan 26–valine 46, isoleucine 64–valine 84, valine 112–leucine 132, methionine 150–alanine 170, glycine 205–cysteine 225, and threonine 226–phenylalanine 246. The tract at residues alanine 275–aspartate 299 is disordered. Residues glycine 279 to glutamate 288 are compositionally biased toward polar residues. Residue serine 285 is modified to Phosphoserine.

Belongs to the ELO family. ELOVL5 subfamily. In terms of assembly, interacts with TECR.

Its subcellular location is the endoplasmic reticulum membrane. The protein resides in the cell projection. The protein localises to the dendrite. The enzyme catalyses a very-long-chain acyl-CoA + malonyl-CoA + H(+) = a very-long-chain 3-oxoacyl-CoA + CO2 + CoA. It catalyses the reaction (6Z,9Z,12Z)-octadecatrienoyl-CoA + malonyl-CoA + H(+) = (8Z,11Z,14Z)-3-oxoeicosatrienoyl-CoA + CO2 + CoA. It carries out the reaction (9Z,12Z,15Z)-octadecatrienoyl-CoA + malonyl-CoA + H(+) = (11Z,14Z,17Z)-3-oxoeicosatrienoyl-CoA + CO2 + CoA. The catalysed reaction is (9Z)-hexadecenoyl-CoA + malonyl-CoA + H(+) = 3-oxo-(11Z)-octadecenoyl-CoA + CO2 + CoA. The enzyme catalyses (9Z)-octadecenoyl-CoA + malonyl-CoA + H(+) = 3-oxo-(11Z)-eicosenoyl-CoA + CO2 + CoA. It catalyses the reaction (11Z)-octadecenoyl-CoA + malonyl-CoA + H(+) = 3-oxo-(13Z)-eicosenoyl-CoA + CO2 + CoA. It carries out the reaction (9Z,12Z)-octadecadienoyl-CoA + malonyl-CoA + H(+) = (11Z,14Z)-3-oxoicosa-11,14-dienoyl-CoA + CO2 + CoA. The catalysed reaction is (6Z,9Z,12Z,15Z)-octadecatetraenoyl-CoA + malonyl-CoA + H(+) = (8Z,11Z,14Z,17Z)-3-oxoicosatetraenoyl-CoA + CO2 + CoA. The enzyme catalyses (5Z,8Z,11Z,14Z)-eicosatetraenoyl-CoA + malonyl-CoA + H(+) = (7Z,10Z,13Z,16Z)-3-oxodocosatetraenoyl-CoA + CO2 + CoA. It catalyses the reaction (5Z,8Z,11Z,14Z,17Z)-eicosapentaenoyl-CoA + malonyl-CoA + H(+) = 3-oxo-(7Z,10Z,13Z,16Z,19Z)-docosapentaenoyl-CoA + CO2 + CoA. It participates in lipid metabolism; polyunsaturated fatty acid biosynthesis. Catalyzes the first and rate-limiting reaction of the four reactions that constitute the long-chain fatty acids elongation cycle. This endoplasmic reticulum-bound enzymatic process allows the addition of 2 carbons to the chain of long- and very long-chain fatty acids (VLCFAs) per cycle. Condensing enzyme that acts specifically toward polyunsaturated acyl-CoA with the higher activity toward C18:3(n-6) acyl-CoA. May participate in the production of monounsaturated and of polyunsaturated VLCFAs of different chain lengths that are involved in multiple biological processes as precursors of membrane lipids and lipid mediators. In conditions where the essential linoleic and alpha linoleic fatty acids are lacking it is also involved in the synthesis of Mead acid from oleic acid. This Macaca fascicularis (Crab-eating macaque) protein is Very long chain fatty acid elongase 5.